The following is a 643-amino-acid chain: Alpha-dioxygenase PIOX (643 aa).

The Proton acceptor role is filled by histidine 167. Position 168 (aspartate 168) interacts with Ca(2+). Position 172 (histidine 172) interacts with heme b. Ca(2+) contacts are provided by threonine 220, tryptophan 222, aspartate 224, and serine 226. 3 residues coordinate heme b: histidine 392, arginine 489, and arginine 493.

It belongs to the peroxidase family. The cofactor is heme b. Ca(2+) is required as a cofactor.

It catalyses the reaction a 1,2-saturated fatty acid + O2 = a (2R)-2-hydroperoxy fatty acid. The enzyme catalyses (9Z,12Z,15Z)-octadecatrienoate + O2 = (R)-2-hydroperoxy-(9Z,12Z,15Z)-octadecatrienoate. The catalysed reaction is (9Z,12Z)-octadecadienoate + O2 = (2R,9Z,12Z)-2-hydroperoxyoctadecadienoate. Alpha-dioxygenase that catalyzes the primary oxygenation step of a variety of 14-20 carbon fatty acids, containing up to three unsaturated bonds, into their corresponding 2R-hydroperoxides. Involved in the production of oxylipins that function in cell signaling, wound healing, and protection from infection. In Nicotiana tabacum (Common tobacco), this protein is Alpha-dioxygenase PIOX.